We begin with the raw amino-acid sequence, 318 residues long: Ribosomal RNA small subunit methyltransferase H (318 aa).

S-adenosyl-L-methionine is bound by residues 33–35 (GGH), Asp-53, Phe-80, Asp-101, and Gln-108.

It belongs to the methyltransferase superfamily. RsmH family.

It localises to the cytoplasm. The catalysed reaction is cytidine(1402) in 16S rRNA + S-adenosyl-L-methionine = N(4)-methylcytidine(1402) in 16S rRNA + S-adenosyl-L-homocysteine + H(+). Its function is as follows. Specifically methylates the N4 position of cytidine in position 1402 (C1402) of 16S rRNA. In Symbiobacterium thermophilum (strain DSM 24528 / JCM 14929 / IAM 14863 / T), this protein is Ribosomal RNA small subunit methyltransferase H.